The chain runs to 157 residues: Phosphopantetheine adenylyltransferase (157 aa).

This sequence belongs to the eukaryotic CoaD family. As to quaternary structure, monomer.

Its subcellular location is the cytoplasm. It carries out the reaction (R)-4'-phosphopantetheine + ATP + H(+) = 3'-dephospho-CoA + diphosphate. It functions in the pathway cofactor biosynthesis; coenzyme A biosynthesis. Functionally, reversibly transfers an adenylyl group from ATP to 4'-phosphopantetheine, yielding dephospho-CoA (dPCoA) and pyrophosphate. The polypeptide is Phosphopantetheine adenylyltransferase (Pyrococcus abyssi (strain GE5 / Orsay)).